Here is a 317-residue protein sequence, read N- to C-terminus: Putative 2-hydroxyacid dehydrogenase SA2098 (317 aa).

NAD(+) contacts are provided by residues 155–156, 234–236, and D260; these read EI and ASR. R236 is an active-site residue. Residue E265 is part of the active site. H283 (proton donor) is an active-site residue. Residue 283–286 coordinates NAD(+); the sequence is HIGN.

Belongs to the D-isomer specific 2-hydroxyacid dehydrogenase family.

This chain is Putative 2-hydroxyacid dehydrogenase SA2098, found in Staphylococcus aureus (strain N315).